Reading from the N-terminus, the 184-residue chain is Peptidoglycan-recognition protein SC2 (184 aa).

The N-terminal stretch at 1–20 (MANKALILLAVLFCAQAVLG) is a signal peptide. The region spanning 45–169 (SYAVIHHTAG…RQVGSTECPG (125 aa)) is the N-acetylmuramoyl-L-alanine amidase domain. H50 contacts Zn(2+). Residues C57 and C63 are joined by a disulfide bond. H159 and C167 together coordinate Zn(2+).

Belongs to the N-acetylmuramoyl-L-alanine amidase 2 family. Zn(2+) is required as a cofactor. Constitutively expressed at high level in gut, in addition to the induced expression in fat body.

The protein resides in the secreted. It catalyses the reaction Hydrolyzes the link between N-acetylmuramoyl residues and L-amino acid residues in certain cell-wall glycopeptides.. Its function is as follows. N-acetylmuramyl-L-alanine amidase involved in innate immunity by degrading bacterial peptidoglycans (PGN). Probably plays a scavenger role by digesting biologically active PGN into biologically inactive fragments. Has no direct bacteriolytic activity. In Drosophila melanogaster (Fruit fly), this protein is Peptidoglycan-recognition protein SC2 (PGRP-SC2).